Consider the following 384-residue polypeptide: Galactokinase (384 aa).

35–38 lines the substrate pocket; sequence EHTD. ATP contacts are provided by residues serine 69 and 125–131; that span reads GAGLSSS. Positions 131 and 163 each coordinate Mg(2+). Residue aspartate 175 is the Proton acceptor of the active site. Tyrosine 224 provides a ligand contact to substrate.

The protein belongs to the GHMP kinase family. GalK subfamily.

It localises to the cytoplasm. The enzyme catalyses alpha-D-galactose + ATP = alpha-D-galactose 1-phosphate + ADP + H(+). It functions in the pathway carbohydrate metabolism; galactose metabolism. Its function is as follows. Catalyzes the transfer of the gamma-phosphate of ATP to D-galactose to form alpha-D-galactose-1-phosphate (Gal-1-P). The protein is Galactokinase of Aliivibrio fischeri (strain ATCC 700601 / ES114) (Vibrio fischeri).